The primary structure comprises 229 residues: Heptaprenylglyceryl phosphate synthase (229 aa).

A sn-glycerol 1-phosphate-binding site is contributed by K12. The Mg(2+) site is built by D14 and S40. Residues Y159 to G164, G189, and G209 to N210 contribute to the sn-glycerol 1-phosphate site.

Belongs to the GGGP/HepGP synthase family. Group I subfamily. In terms of assembly, homodimer. Requires Mg(2+) as cofactor.

The catalysed reaction is sn-glycerol 1-phosphate + all-trans-heptaprenyl diphosphate = 3-heptaprenyl-sn-glycero-1-phosphate + diphosphate. It functions in the pathway membrane lipid metabolism; glycerophospholipid metabolism. Functionally, prenyltransferase that catalyzes in vivo the transfer of the heptaprenyl moiety of heptaprenyl pyrophosphate (HepPP; 35 carbon atoms) to the C3 hydroxyl of sn-glycerol-1-phosphate (G1P), producing heptaprenylglyceryl phosphate (HepGP). This reaction is an ether-bond-formation step in the biosynthesis of archaea-type G1P-based membrane lipids found in Bacillales. The sequence is that of Heptaprenylglyceryl phosphate synthase from Bacillus cereus (strain ATCC 10987 / NRS 248).